Reading from the N-terminus, the 258-residue chain is NAD-capped RNA hydrolase NudC (258 aa).

Arg69 contributes to the substrate binding site. Zn(2+)-binding residues include Cys98 and Cys101. Position 111 (Glu111) interacts with substrate. Zn(2+) contacts are provided by Cys116 and Cys119. Position 124 (Tyr124) interacts with substrate. The 124-residue stretch at 125 to 248 (PQIAPCIIVA…TVARRLIEDT (124 aa)) folds into the Nudix hydrolase domain. Ala158, Glu174, and Glu178 together coordinate a divalent metal cation. The Nudix box motif lies at 159–180 (GFVEVGETLEQTVAREVMEESG). 192 to 199 (QPWPFPMS) is a substrate binding site. A divalent metal cation is bound at residue Glu219. Ala241 provides a ligand contact to substrate.

This sequence belongs to the Nudix hydrolase family. NudC subfamily. In terms of assembly, homodimer. It depends on Mg(2+) as a cofactor. Mn(2+) is required as a cofactor. Zn(2+) serves as cofactor.

It catalyses the reaction a 5'-end NAD(+)-phospho-ribonucleoside in mRNA + H2O = a 5'-end phospho-adenosine-phospho-ribonucleoside in mRNA + beta-nicotinamide D-ribonucleotide + 2 H(+). The enzyme catalyses NAD(+) + H2O = beta-nicotinamide D-ribonucleotide + AMP + 2 H(+). The catalysed reaction is NADH + H2O = reduced beta-nicotinamide D-ribonucleotide + AMP + 2 H(+). In terms of biological role, mRNA decapping enzyme that specifically removes the nicotinamide adenine dinucleotide (NAD) cap from a subset of mRNAs by hydrolyzing the diphosphate linkage to produce nicotinamide mononucleotide (NMN) and 5' monophosphate mRNA. The NAD-cap is present at the 5'-end of some mRNAs and stabilizes RNA against 5'-processing. Has preference for mRNAs with a 5'-end purine. Catalyzes the hydrolysis of a broad range of dinucleotide pyrophosphates. The chain is NAD-capped RNA hydrolase NudC from Enterobacter sp. (strain 638).